Reading from the N-terminus, the 252-residue chain is Ribosomal RNA small subunit methyltransferase J (252 aa).

Residues 104–105 (RD), 120–121 (ER), and Asp174 contribute to the S-adenosyl-L-methionine site.

Belongs to the methyltransferase superfamily. RsmJ family.

The protein localises to the cytoplasm. It carries out the reaction guanosine(1516) in 16S rRNA + S-adenosyl-L-methionine = N(2)-methylguanosine(1516) in 16S rRNA + S-adenosyl-L-homocysteine + H(+). Its function is as follows. Specifically methylates the guanosine in position 1516 of 16S rRNA. In Mannheimia succiniciproducens (strain KCTC 0769BP / MBEL55E), this protein is Ribosomal RNA small subunit methyltransferase J.